A 105-amino-acid chain; its full sequence is Large ribosomal subunit protein uL24 (105 aa).

It belongs to the universal ribosomal protein uL24 family. As to quaternary structure, part of the 50S ribosomal subunit.

Functionally, one of two assembly initiator proteins, it binds directly to the 5'-end of the 23S rRNA, where it nucleates assembly of the 50S subunit. One of the proteins that surrounds the polypeptide exit tunnel on the outside of the subunit. In Xanthomonas campestris pv. campestris (strain 8004), this protein is Large ribosomal subunit protein uL24.